Here is a 115-residue protein sequence, read N- to C-terminus: ATP-dependent Clp protease adapter protein ClpS (115 aa).

It belongs to the ClpS family. In terms of assembly, binds to the N-terminal domain of the chaperone ClpA.

Involved in the modulation of the specificity of the ClpAP-mediated ATP-dependent protein degradation. In Leptothrix cholodnii (strain ATCC 51168 / LMG 8142 / SP-6) (Leptothrix discophora (strain SP-6)), this protein is ATP-dependent Clp protease adapter protein ClpS.